Here is a 125-residue protein sequence, read N- to C-terminus: Phosphoribosyl-AMP cyclohydrolase (125 aa).

Mg(2+) is bound at residue Asp-74. Residue Cys-75 coordinates Zn(2+). Mg(2+) contacts are provided by Asp-76 and Asp-78. The Zn(2+) site is built by Cys-92 and Cys-99.

The protein belongs to the PRA-CH family. In terms of assembly, homodimer. The cofactor is Mg(2+). Zn(2+) serves as cofactor.

It localises to the cytoplasm. It carries out the reaction 1-(5-phospho-beta-D-ribosyl)-5'-AMP + H2O = 1-(5-phospho-beta-D-ribosyl)-5-[(5-phospho-beta-D-ribosylamino)methylideneamino]imidazole-4-carboxamide. It participates in amino-acid biosynthesis; L-histidine biosynthesis; L-histidine from 5-phospho-alpha-D-ribose 1-diphosphate: step 3/9. Its function is as follows. Catalyzes the hydrolysis of the adenine ring of phosphoribosyl-AMP. The chain is Phosphoribosyl-AMP cyclohydrolase from Desulfatibacillum aliphaticivorans.